The following is a 521-amino-acid chain: MSGIALRRRREQAQRRRSIAGVLAAVGGGTALGLAAPPTGWGVLVWVALVPLLVYLRAEHRPRAFWLGTLAGMVYYAILLRWLLGFHPLTWLGIEWWPSLAIALGAWLFVSASQAWVIGLWASLVVRTRLSGLRRVLFAVGLWVGLHWLWGQGETAFPWGTLAQSLAGDLWAVQTVALGGAQLLVGLAVAVNALVAESWSTRRVGYAGLAALLAASVYLYGWWQLAQPLPAGEPLRMGVIQGNIAQARKWTPDGRRETVETYVRGYEELAAAGAQLVLTPETAFPFIWSRPTNPAAPLVPEIQSRRVPVLLSAFERRTDGQVATTLFALDGDARTISTFNKIHLVPFGEQIPLKALIGPLVRKLSPVQQEVFAGSLGQRLQTPVGLVAAGICFDSAFADGFRAQVAAGARLLVQSTNDAWYGPAMAPQHHALDALRAVETGRYLVRASNNGTSAVVDPLGRTTRITGWNVYAAFVEPVRLLEGMTLYALWGDWFVPLSAALALLGLIAGRSPAGRRGRRNF.

Transmembrane regions (helical) follow at residues 34 to 54 (LAAPPTGWGVLVWVALVPLLV), 64 to 84 (AFWLGTLAGMVYYAILLRWLL), 100 to 120 (LAIALGAWLFVSASQAWVIGL), 137 to 157 (LFAVGLWVGLHWLWGQGETAF), 176 to 196 (VALGGAQLLVGLAVAVNALVA), and 206 to 226 (YAGLAALLAASVYLYGWWQLA). The CN hydrolase domain occupies 240-480 (IQGNIAQARK…YAAFVEPVRL (241 aa)). Catalysis depends on Glu-281, which acts as the Proton acceptor. Residue Lys-341 is part of the active site. Cys-392 serves as the catalytic Nucleophile. Residues 488 to 508 (ALWGDWFVPLSAALALLGLIA) traverse the membrane as a helical segment.

This sequence belongs to the CN hydrolase family. Apolipoprotein N-acyltransferase subfamily.

The protein localises to the cell inner membrane. The catalysed reaction is N-terminal S-1,2-diacyl-sn-glyceryl-L-cysteinyl-[lipoprotein] + a glycerophospholipid = N-acyl-S-1,2-diacyl-sn-glyceryl-L-cysteinyl-[lipoprotein] + a 2-acyl-sn-glycero-3-phospholipid + H(+). The protein operates within protein modification; lipoprotein biosynthesis (N-acyl transfer). In terms of biological role, catalyzes the phospholipid dependent N-acylation of the N-terminal cysteine of apolipoprotein, the last step in lipoprotein maturation. The chain is Apolipoprotein N-acyltransferase from Gloeobacter violaceus (strain ATCC 29082 / PCC 7421).